A 426-amino-acid polypeptide reads, in one-letter code: N-formyl-4-amino-5-aminomethyl-2-methylpyrimidine deformylase (426 aa).

The stretch at 1 to 31 (MDQQIYSLQKKVEEHKEELIQLAKTLISYQT) forms a coiled coil. Residue histidine 89 participates in Zn(2+) binding. The active site involves aspartate 91. Residue aspartate 122 coordinates Zn(2+). The Proton acceptor role is filled by glutamate 156. Residues glutamate 157, aspartate 180, and histidine 394 each coordinate Zn(2+).

Belongs to the peptidase M20A family. The cofactor is Zn(2+). Co(2+) is required as a cofactor.

The enzyme catalyses N-formyl-4-amino-5-aminomethyl-2-methylpyrimidine + H2O = 4-amino-5-aminomethyl-2-methylpyrimidine + formate. It participates in cofactor biosynthesis; thiamine diphosphate biosynthesis. Catalyzes the deformylation of the formylaminopyrimidine N-formyl-4-amino-5-aminomethyl-2-methylpyrimidine (FAMP) to give the corresponding aminopyrimidine. The protein is N-formyl-4-amino-5-aminomethyl-2-methylpyrimidine deformylase of Bacillus subtilis (strain 168).